Reading from the N-terminus, the 475-residue chain is Citrate synthase, mitochondrial (475 aa).

Catalysis depends on residues His-310, His-356, and Asp-411.

The protein belongs to the citrate synthase family.

The protein localises to the mitochondrion matrix. The catalysed reaction is oxaloacetate + acetyl-CoA + H2O = citrate + CoA + H(+). Its pathway is carbohydrate metabolism; tricarboxylic acid cycle; isocitrate from oxaloacetate: step 1/2. This chain is Citrate synthase, mitochondrial (cit-1), found in Aspergillus niger.